The chain runs to 396 residues: Tryptophan synthase beta chain (396 aa).

Residue K88 is modified to N6-(pyridoxal phosphate)lysine.

This sequence belongs to the TrpB family. As to quaternary structure, tetramer of two alpha and two beta chains. Pyridoxal 5'-phosphate is required as a cofactor.

The enzyme catalyses (1S,2R)-1-C-(indol-3-yl)glycerol 3-phosphate + L-serine = D-glyceraldehyde 3-phosphate + L-tryptophan + H2O. It functions in the pathway amino-acid biosynthesis; L-tryptophan biosynthesis; L-tryptophan from chorismate: step 5/5. Its function is as follows. The beta subunit is responsible for the synthesis of L-tryptophan from indole and L-serine. In Shewanella sp. (strain ANA-3), this protein is Tryptophan synthase beta chain.